We begin with the raw amino-acid sequence, 648 residues long: Rab11 family-interacting protein 1 (648 aa).

Residues 1 to 129 (MSLAASAGRG…DQSRRKKQWY (129 aa)) form the C2 domain. Basic and acidic residues predominate over residues 164–188 (SMKDKSRNPFGKLKDKIKGKNKDNT). Disordered stretches follow at residues 164–470 (SMKD…GRKG), 483–503 (VRRP…SQNP), and 516–555 (VESK…PKIT). A compositionally biased stretch (polar residues) spans 189 to 201 (SDTASAIVPSTTP). 3 positions are modified to phosphoserine: Ser-205, Ser-209, and Ser-237. Composition is skewed to polar residues over residues 227 to 242 (PSLQ…SVLP) and 271 to 296 (SSAS…SNFS). Residues Ser-304, Ser-319, Ser-343, Ser-345, Ser-347, Ser-349, Ser-360, Ser-361, and Ser-386 each carry the phosphoserine modification. Over residues 314–323 (DSLSRSNVCI) the composition is skewed to polar residues. 2 stretches are compositionally biased toward basic and acidic residues: residues 381 to 394 (SDRR…KDSM) and 422 to 436 (ATKE…ESKK). Ser-438 is modified (phosphoserine). A compositionally biased stretch (basic and acidic residues) spans 445-454 (GKKDVAKGSE). The region spanning 576–638 (KKYQPSDPAF…EETPNILRVP (63 aa)) is the FIP-RBD domain. The interval 584-648 (AFAYAQLTHD…AQTGKKAGKM (65 aa)) is necessary for interaction with RAB4A and RAB11A, subcellular location and endosomal recycling.

In terms of assembly, homooligomer. Interacts with RAB11A, RAB11B, RAB25, RAB4A and RAB14.

The protein resides in the recycling endosome. It localises to the cytoplasmic vesicle. Functionally, a Rab11 effector protein involved in the endosomal recycling process. Also involved in controlling membrane trafficking along the phagocytic pathway and in phagocytosis. Interaction with RAB14 may function in the process of neurite formation. The polypeptide is Rab11 family-interacting protein 1 (Rattus norvegicus (Rat)).